The primary structure comprises 301 residues: Sulfate adenylyltransferase subunit 2 (301 aa).

The tract at residues 282–301 (RLIDRDEAGSMEKKKREGYF) is disordered.

It belongs to the PAPS reductase family. CysD subfamily. Heterodimer composed of CysD, the smaller subunit, and CysN.

It carries out the reaction sulfate + ATP + H(+) = adenosine 5'-phosphosulfate + diphosphate. It functions in the pathway sulfur metabolism; hydrogen sulfide biosynthesis; sulfite from sulfate: step 1/3. Functionally, with CysN forms the ATP sulfurylase (ATPS) that catalyzes the adenylation of sulfate producing adenosine 5'-phosphosulfate (APS) and diphosphate, the first enzymatic step in sulfur assimilation pathway. APS synthesis involves the formation of a high-energy phosphoric-sulfuric acid anhydride bond driven by GTP hydrolysis by CysN coupled to ATP hydrolysis by CysD. The protein is Sulfate adenylyltransferase subunit 2 of Chelativorans sp. (strain BNC1).